Here is a 144-residue protein sequence, read N- to C-terminus: Probable transcription termination protein NusA (144 aa).

Residues 101-144 (RTDIVVGVKPEEIGKVIGKEGKNIKLFKDAVSRYFNVNSISVKQ) enclose the KH domain.

This sequence belongs to the NusA family.

The protein resides in the cytoplasm. Its function is as follows. Participates in transcription termination. This is Probable transcription termination protein NusA from Thermoplasma acidophilum (strain ATCC 25905 / DSM 1728 / JCM 9062 / NBRC 15155 / AMRC-C165).